Here is a 236-residue protein sequence, read N- to C-terminus: Phosphoribosylaminoimidazole-succinocarboxamide synthase (236 aa).

Belongs to the SAICAR synthetase family.

The enzyme catalyses 5-amino-1-(5-phospho-D-ribosyl)imidazole-4-carboxylate + L-aspartate + ATP = (2S)-2-[5-amino-1-(5-phospho-beta-D-ribosyl)imidazole-4-carboxamido]succinate + ADP + phosphate + 2 H(+). The protein operates within purine metabolism; IMP biosynthesis via de novo pathway; 5-amino-1-(5-phospho-D-ribosyl)imidazole-4-carboxamide from 5-amino-1-(5-phospho-D-ribosyl)imidazole-4-carboxylate: step 1/2. This Pseudomonas putida (strain W619) protein is Phosphoribosylaminoimidazole-succinocarboxamide synthase.